The primary structure comprises 158 residues: METSQNPQSQFFIEHILQILPHRYPMLLVDRVVELEANKKIVAYKNITFNEDVFNGHFPNKPIFPGVLIVEGMAQSGGLLAFTSLWGFDPEMAKTKIVYFMTIDKVKFRIPVTPGDKLEYHLEVLKHKGMIWQVGGTAQVDGKVVAEAELKAMIAERD.

His57 is a catalytic residue.

The protein belongs to the thioester dehydratase family. FabZ subfamily.

It is found in the cytoplasm. The catalysed reaction is a (3R)-hydroxyacyl-[ACP] = a (2E)-enoyl-[ACP] + H2O. Functionally, involved in unsaturated fatty acids biosynthesis. Catalyzes the dehydration of short chain beta-hydroxyacyl-ACPs and long chain saturated and unsaturated beta-hydroxyacyl-ACPs. This is 3-hydroxyacyl-[acyl-carrier-protein] dehydratase FabZ from Helicobacter acinonychis (strain Sheeba).